The sequence spans 218 residues: Thiopurine S-methyltransferase (218 aa).

S-adenosyl-L-methionine-binding residues include W10, L45, E66, and R123.

The protein belongs to the class I-like SAM-binding methyltransferase superfamily. TPMT family.

The protein resides in the cytoplasm. The enzyme catalyses S-adenosyl-L-methionine + a thiopurine = S-adenosyl-L-homocysteine + a thiopurine S-methylether.. The chain is Thiopurine S-methyltransferase from Shewanella baltica (strain OS223).